A 337-amino-acid chain; its full sequence is ATP-dependent 6-phosphofructokinase (337 aa).

An ATP-binding site is contributed by Gly-11. 21 to 25 (RAVVR) provides a ligand contact to ADP. Residues 72–73 (RY) and 102–105 (GDGS) each bind ATP. A Mg(2+)-binding site is contributed by Asp-103. 125-127 (TID) serves as a coordination point for substrate. The active-site Proton acceptor is Asp-127. Arg-154 contacts ADP. Substrate-binding positions include Arg-162 and 169 to 171 (MGR). ADP is bound by residues 185–187 (GAD), Lys-212, and 214–216 (KNH). Substrate-binding positions include Glu-223, Arg-245, and 251–254 (HILR).

Belongs to the phosphofructokinase type A (PFKA) family. ATP-dependent PFK group I subfamily. Prokaryotic clade 'B1' sub-subfamily. In terms of assembly, homotetramer. Mg(2+) is required as a cofactor.

It localises to the cytoplasm. It catalyses the reaction beta-D-fructose 6-phosphate + ATP = beta-D-fructose 1,6-bisphosphate + ADP + H(+). It functions in the pathway carbohydrate degradation; glycolysis; D-glyceraldehyde 3-phosphate and glycerone phosphate from D-glucose: step 3/4. Allosterically activated by ADP and other diphosphonucleosides, and allosterically inhibited by phosphoenolpyruvate. In terms of biological role, catalyzes the phosphorylation of D-fructose 6-phosphate to fructose 1,6-bisphosphate by ATP, the first committing step of glycolysis. The sequence is that of ATP-dependent 6-phosphofructokinase from Streptococcus pyogenes serotype M4 (strain MGAS10750).